We begin with the raw amino-acid sequence, 521 residues long: 2,3-bisphosphoglycerate-independent phosphoglycerate mutase 2 (521 aa).

Positions 20 and 70 each coordinate Mn(2+). The active-site Phosphoserine intermediate is serine 70. Substrate contacts are provided by residues histidine 131, 161 to 162 (RD), arginine 193, arginine 199, 270 to 273 (RPDR), and lysine 343. Residues aspartate 410, histidine 414, aspartate 451, histidine 452, and histidine 470 each contribute to the Mn(2+) site.

The protein belongs to the BPG-independent phosphoglycerate mutase family. The cofactor is Mn(2+).

The catalysed reaction is (2R)-2-phosphoglycerate = (2R)-3-phosphoglycerate. Its pathway is carbohydrate degradation; glycolysis; pyruvate from D-glyceraldehyde 3-phosphate: step 3/5. Its function is as follows. Catalyzes the interconversion of 2-phosphoglycerate and 3-phosphoglycerate. The polypeptide is 2,3-bisphosphoglycerate-independent phosphoglycerate mutase 2 (Methanosarcina acetivorans (strain ATCC 35395 / DSM 2834 / JCM 12185 / C2A)).